A 212-amino-acid chain; its full sequence is MPLNEIIPVIENLISRGYIKKQSVIDAILSVPRHKFISKSMESYAYVDSPLEIGYGQTISAIHMVGIMCEELDLDEGQNVLEVGTGSGYHAAVVSKIVGESGKVTTIERIPELFENSKKTLSELGYNNVEVVLGDGTKGYLENAPYDRIYVTASGPDVPKALFKQLNDGGILLAPVGAHFQTLMRYTKINGSISEEKLLEVAFVPLIGENGF.

Serine 60 is an active-site residue.

The protein belongs to the methyltransferase superfamily. L-isoaspartyl/D-aspartyl protein methyltransferase family.

The protein localises to the cytoplasm. It carries out the reaction [protein]-L-isoaspartate + S-adenosyl-L-methionine = [protein]-L-isoaspartate alpha-methyl ester + S-adenosyl-L-homocysteine. Catalyzes the methyl esterification of L-isoaspartyl residues in peptides and proteins that result from spontaneous decomposition of normal L-aspartyl and L-asparaginyl residues. It plays a role in the repair and/or degradation of damaged proteins. This chain is Protein-L-isoaspartate O-methyltransferase, found in Methanococcus maripaludis (strain DSM 14266 / JCM 13030 / NBRC 101832 / S2 / LL).